The primary structure comprises 176 residues: Lipoprotein signal peptidase (176 aa).

Helical transmembrane passes span 12–32, 67–87, and 94–116; these read WYWM…WVLA, WQRW…TIWL, and MWRL…IDRL. Residues Asp123 and Asp141 contribute to the active site. Residues 137 to 157 form a helical membrane-spanning segment; it reads FNIADSAICVGAALIIIDSII.

The protein belongs to the peptidase A8 family.

The protein localises to the cell inner membrane. It carries out the reaction Release of signal peptides from bacterial membrane prolipoproteins. Hydrolyzes -Xaa-Yaa-Zaa-|-(S,diacylglyceryl)Cys-, in which Xaa is hydrophobic (preferably Leu), and Yaa (Ala or Ser) and Zaa (Gly or Ala) have small, neutral side chains.. The protein operates within protein modification; lipoprotein biosynthesis (signal peptide cleavage). Its function is as follows. This protein specifically catalyzes the removal of signal peptides from prolipoproteins. This chain is Lipoprotein signal peptidase, found in Shewanella woodyi (strain ATCC 51908 / MS32).